We begin with the raw amino-acid sequence, 298 residues long: MQNNNRQELQTLRDLIRYAVSRLNAARVALGHGSDNAWDEAVYLVLHGLHLPPDTLDPFLDARVLPSERSRVLDLIDRRVTERLPAAYLTGEAWLRGHRFHVDRRVIVPRSPIAELLDEGLAPWVRDPLQVERALDMCTGSGCLAILAALAFPVAQVDAVDVSSDALEVAARNVAEYGLQDRLTLRQGNLFEALPAAAYDVIVCNPPYVNQASMGALPQEYRHEPALALAGGADGMDLVRRILAAAPGYLSADGVLVLEIGHERDHFEAAFPDLQPVWLDTAESSDQILLLTREQLNT.

This sequence belongs to the protein N5-glutamine methyltransferase family. PrmB subfamily.

The enzyme catalyses L-glutaminyl-[ribosomal protein uL3] + S-adenosyl-L-methionine = N(5)-methyl-L-glutaminyl-[ribosomal protein uL3] + S-adenosyl-L-homocysteine + H(+). Methylates large ribosomal subunit protein uL3 on a specific glutamine residue. In Bordetella pertussis (strain Tohama I / ATCC BAA-589 / NCTC 13251), this protein is Ribosomal protein uL3 glutamine methyltransferase.